Reading from the N-terminus, the 199-residue chain is Probable NADH dehydrogenase [ubiquinone] iron-sulfur protein 7, mitochondrial (199 aa).

The transit peptide at 1-16 directs the protein to the mitochondrion; it reads MLSALRTAGALSTRRL. [4Fe-4S] cluster is bound by residues C74, C75, C139, and C169.

This sequence belongs to the complex I 20 kDa subunit family. In terms of assembly, complex I is composed of 45 different subunits This is a component of the iron-sulfur (IP) fragment of the enzyme. It depends on [4Fe-4S] cluster as a cofactor.

The protein localises to the mitochondrion. It carries out the reaction a ubiquinone + NADH + 5 H(+)(in) = a ubiquinol + NAD(+) + 4 H(+)(out). Core subunit of the mitochondrial membrane respiratory chain NADH dehydrogenase (Complex I) that is believed to belong to the minimal assembly required for catalysis. Complex I functions in the transfer of electrons from NADH to the respiratory chain. The immediate electron acceptor for the enzyme is believed to be ubiquinone. The chain is Probable NADH dehydrogenase [ubiquinone] iron-sulfur protein 7, mitochondrial from Caenorhabditis briggsae.